We begin with the raw amino-acid sequence, 663 residues long: UvrABC system protein B (663 aa).

The region spanning Asp-31–Glu-271 is the Helicase ATP-binding domain. Gly-44–Thr-51 lines the ATP pocket. Positions Tyr-97–Val-120 match the Beta-hairpin motif. Residues Gln-435–Ile-601 enclose the Helicase C-terminal domain. Residues Gln-627–Met-662 form the UVR domain.

This sequence belongs to the UvrB family. As to quaternary structure, forms a heterotetramer with UvrA during the search for lesions. Interacts with UvrC in an incision complex.

It localises to the cytoplasm. Functionally, the UvrABC repair system catalyzes the recognition and processing of DNA lesions. A damage recognition complex composed of 2 UvrA and 2 UvrB subunits scans DNA for abnormalities. Upon binding of the UvrA(2)B(2) complex to a putative damaged site, the DNA wraps around one UvrB monomer. DNA wrap is dependent on ATP binding by UvrB and probably causes local melting of the DNA helix, facilitating insertion of UvrB beta-hairpin between the DNA strands. Then UvrB probes one DNA strand for the presence of a lesion. If a lesion is found the UvrA subunits dissociate and the UvrB-DNA preincision complex is formed. This complex is subsequently bound by UvrC and the second UvrB is released. If no lesion is found, the DNA wraps around the other UvrB subunit that will check the other stand for damage. This is UvrABC system protein B from Streptococcus equi subsp. zooepidemicus (strain H70).